The chain runs to 48 residues: Light-harvesting protein B-870 beta chain (48 aa).

The Cytoplasmic segment spans residues 2-21; the sequence is AERKGSISGLTDDEAQEFHK. The a bacteriochlorophyll site is built by H20 and H38. A helical transmembrane segment spans residues 22 to 44; the sequence is FWVQGFVGFTAVAVVAHFLVWVW. Residues 45–48 are Periplasmic-facing; the sequence is RPWL.

An alpha/beta heterodimer. The core complex is formed by different alpha and beta chains, binding bacteriochlorophyll molecules, and arranged most probably in tetrameric structures disposed around the reaction center. The non-pigmented gamma chains may constitute additional components.

Its subcellular location is the cell inner membrane. Antenna complexes are light-harvesting systems, which transfer the excitation energy to the reaction centers. In Rubrivivax gelatinosus (Rhodocyclus gelatinosus), this protein is Light-harvesting protein B-870 beta chain (pufB).